A 221-amino-acid polypeptide reads, in one-letter code: Riboflavin kinase (221 aa).

Residues 1–92 (MVTPEDLECL…YRLFGRQEKS (92 aa)) form an H-T-H motif-like region. The riboflavin kinase stretch occupies residues 93-221 (LMLNGTVQSG…GDEVTIEVTL (129 aa)). 102 to 107 (GLGEGA) provides a ligand contact to CDP. Mg(2+) contacts are provided by Thr131 and Asn133. Residues Thr188 and Glu196 each coordinate FMN. 201–204 (EGLR) serves as a coordination point for CDP.

Belongs to the archaeal riboflavin kinase family. The cofactor is Mg(2+).

It carries out the reaction riboflavin + CTP = CDP + FMN + H(+). Its pathway is cofactor biosynthesis; FMN biosynthesis; FMN from riboflavin (CTP route): step 1/1. Catalyzes the CTP-dependent phosphorylation of riboflavin (vitamin B2) to form flavin mononucleotide (FMN). In Methanospirillum hungatei JF-1 (strain ATCC 27890 / DSM 864 / NBRC 100397 / JF-1), this protein is Riboflavin kinase (ribK).